A 479-amino-acid polypeptide reads, in one-letter code: Cysteine--tRNA ligase (479 aa).

Cysteine 29 provides a ligand contact to Zn(2+). The 'HIGH' region motif lies at 31-41; the sequence is ATVQGAPHIGH. Residues 171-197 form a disordered region; the sequence is QRVEDMQDAPDADPRGKRDPRDFALWK. Residues 182-197 are compositionally biased toward basic and acidic residues; it reads ADPRGKRDPRDFALWK. Residues cysteine 224, histidine 249, and glutamate 253 each coordinate Zn(2+). Positions 280 to 284 match the 'KMSKS' region motif; the sequence is KMSKS. Residue lysine 283 participates in ATP binding.

The protein belongs to the class-I aminoacyl-tRNA synthetase family. As to quaternary structure, monomer. Zn(2+) serves as cofactor.

The protein localises to the cytoplasm. The enzyme catalyses tRNA(Cys) + L-cysteine + ATP = L-cysteinyl-tRNA(Cys) + AMP + diphosphate. This Kocuria rhizophila (strain ATCC 9341 / DSM 348 / NBRC 103217 / DC2201) protein is Cysteine--tRNA ligase.